The following is a 402-amino-acid chain: ORC1-type DNA replication protein 17 (402 aa).

2 residues coordinate ATP: Tyr-223 and Arg-235.

This sequence belongs to the CDC6/cdc18 family.

Its function is as follows. Involved in regulation of DNA replication. The chain is ORC1-type DNA replication protein 17 (cdc6q) from Haloarcula marismortui (strain ATCC 43049 / DSM 3752 / JCM 8966 / VKM B-1809) (Halobacterium marismortui).